Reading from the N-terminus, the 150-residue chain is Deoxyuridine 5'-triphosphate nucleotidohydrolase (150 aa).

Substrate-binding positions include 70–72 (RSG), asparagine 83, and 87–89 (TID).

It belongs to the dUTPase family. The cofactor is Mg(2+).

The enzyme catalyses dUTP + H2O = dUMP + diphosphate + H(+). It participates in pyrimidine metabolism; dUMP biosynthesis; dUMP from dCTP (dUTP route): step 2/2. Its function is as follows. This enzyme is involved in nucleotide metabolism: it produces dUMP, the immediate precursor of thymidine nucleotides and it decreases the intracellular concentration of dUTP so that uracil cannot be incorporated into DNA. This chain is Deoxyuridine 5'-triphosphate nucleotidohydrolase, found in Desulfotalea psychrophila (strain LSv54 / DSM 12343).